The chain runs to 39 residues: Photosystem II reaction center protein J (39 aa).

Residues 7 to 27 form a helical membrane-spanning segment; that stretch reads IPLWLVATIGGIAVLTVLGLF.

It belongs to the PsbJ family. PSII is composed of 1 copy each of membrane proteins PsbA, PsbB, PsbC, PsbD, PsbE, PsbF, PsbH, PsbI, PsbJ, PsbK, PsbL, PsbM, PsbT, PsbX, PsbY, PsbZ, Psb30/Ycf12, at least 3 peripheral proteins of the oxygen-evolving complex and a large number of cofactors. It forms dimeric complexes.

The protein resides in the plastid. It is found in the chloroplast thylakoid membrane. Functionally, one of the components of the core complex of photosystem II (PSII). PSII is a light-driven water:plastoquinone oxidoreductase that uses light energy to abstract electrons from H(2)O, generating O(2) and a proton gradient subsequently used for ATP formation. It consists of a core antenna complex that captures photons, and an electron transfer chain that converts photonic excitation into a charge separation. This is Photosystem II reaction center protein J from Cyanidioschyzon merolae (strain NIES-3377 / 10D) (Unicellular red alga).